The following is a 251-amino-acid chain: Ditrans,polycis-undecaprenyl-diphosphate synthase ((2E,6E)-farnesyl-diphosphate specific) (251 aa).

Residue Asp20 is part of the active site. Residue Asp20 coordinates Mg(2+). Substrate contacts are provided by residues 21-24, Trp25, Arg33, His37, and 65-67; these read GNGR and SSE. Asn68 (proton acceptor) is an active-site residue. Substrate is bound by residues Trp69, Arg71, Arg188, and 194–196; that span reads RIS. Glu207 is a Mg(2+) binding site.

Belongs to the UPP synthase family. Homodimer. Mg(2+) serves as cofactor.

The enzyme catalyses 8 isopentenyl diphosphate + (2E,6E)-farnesyl diphosphate = di-trans,octa-cis-undecaprenyl diphosphate + 8 diphosphate. Its function is as follows. Catalyzes the sequential condensation of isopentenyl diphosphate (IPP) with (2E,6E)-farnesyl diphosphate (E,E-FPP) to yield (2Z,6Z,10Z,14Z,18Z,22Z,26Z,30Z,34E,38E)-undecaprenyl diphosphate (di-trans,octa-cis-UPP). UPP is the precursor of glycosyl carrier lipid in the biosynthesis of bacterial cell wall polysaccharide components such as peptidoglycan and lipopolysaccharide. The protein is Ditrans,polycis-undecaprenyl-diphosphate synthase ((2E,6E)-farnesyl-diphosphate specific) of Vibrio parahaemolyticus serotype O3:K6 (strain RIMD 2210633).